Here is a 252-residue protein sequence, read N- to C-terminus: 2,5-diamino-6-ribosylamino-4(3H)-pyrimidinone 5'-phosphate reductase (252 aa).

Residues Thr-80, Asp-84, Val-166, and 189–193 (GGIVI) contribute to the NADP(+) site.

It belongs to the HTP reductase family. Homodimer.

The enzyme catalyses 2,5-diamino-6-(1-D-ribitylamino)pyrimidin-4(3H)-one 5'-phosphate + NADP(+) = 2,5-diamino-6-(1-D-ribosylamino)pyrimidin-4(3H)-one 5'-phosphate + NADPH + H(+). It carries out the reaction 2,5-diamino-6-(1-D-ribitylamino)pyrimidin-4(3H)-one 5'-phosphate + NAD(+) = 2,5-diamino-6-(1-D-ribosylamino)pyrimidin-4(3H)-one 5'-phosphate + NADH + H(+). It functions in the pathway cofactor biosynthesis; riboflavin biosynthesis. Catalyzes an early step in riboflavin biosynthesis, the NADPH-dependent reduction of the ribose side chain of 2,5-diamino-6-ribosylamino-4(3H)-pyrimidinone 5'-phosphate, yielding 2,5-diamino-6-ribitylamino-4(3H)-pyrimidinone 5'-phosphate. In Kluyveromyces lactis (strain ATCC 8585 / CBS 2359 / DSM 70799 / NBRC 1267 / NRRL Y-1140 / WM37) (Yeast), this protein is 2,5-diamino-6-ribosylamino-4(3H)-pyrimidinone 5'-phosphate reductase (RIB7).